The following is a 115-amino-acid chain: ATP synthase subunits region ORF 7 (115 aa).

This is ATP synthase subunits region ORF 7 from Fuscovulum blasticum (Rhodobacter blasticus).